Here is a 288-residue protein sequence, read N- to C-terminus: Energy-coupling factor transporter ATP-binding protein EcfA2 (288 aa).

An ABC transporter domain is found at Ile3 to Gly246. An ATP-binding site is contributed by Gly40–Ser47. Glu171 acts as the Proton acceptor in catalysis.

Belongs to the ABC transporter superfamily. Energy-coupling factor EcfA family. Forms a stable energy-coupling factor (ECF) transporter complex probably composed of 2 membrane-embedded substrate-binding proteins (S component), 2 ATP-binding proteins (A component) and 2 transmembrane proteins (T component). This complex interacts with a number of substrate-specific components, including FolT and ThiT for 5-formyltetrahydrofolate and thiamine respectively.

It localises to the cell membrane. In terms of biological role, ATP-binding (A) component of a common energy-coupling factor (ECF) ABC-transporter complex. Unlike classic ABC transporters this ECF transporter provides the energy necessary to transport a number of different substrates including 5-formyltetrahydrofolate and thiamine. Expression of the complex plus FolT or ThiT in Lactococcus lactis subsp. cremoris (strain NZ9000) allows 5-formyltetrahydrofolate or thiamine uptake respectively; 5-formyltetrahydrofolate or thiamine are not taken up in the absence of FolT/ThiT or the EcfA1A2T complex. Deenergized L.lactis subsp. cremoris (treated with 2-deoxyglucose) do not take up substrate. This Lacticaseibacillus paracasei (strain ATCC 334 / BCRC 17002 / CCUG 31169 / CIP 107868 / KCTC 3260 / NRRL B-441) (Lactobacillus paracasei) protein is Energy-coupling factor transporter ATP-binding protein EcfA2.